The following is a 515-amino-acid chain: Galactose/methyl galactoside import ATP-binding protein MglA (515 aa).

ABC transporter domains follow at residues 8-243 and 254-499; these read LEMR…VGRE and IPKE…AKYL. 40–47 is an ATP binding site; sequence GENGAGKS.

The protein belongs to the ABC transporter superfamily. Galactose/methyl galactoside importer (TC 3.A.1.2.3) family. As to quaternary structure, the complex is composed of one ATP-binding protein (MglA), two transmembrane proteins (MglC) and a solute-binding protein (MglB).

Its subcellular location is the cell membrane. The enzyme catalyses D-galactose(out) + ATP + H2O = D-galactose(in) + ADP + phosphate + H(+). The catalysed reaction is methyl beta-D-galactoside(out) + ATP + H2O = methyl beta-D-galactoside(in) + ADP + phosphate + H(+). In terms of biological role, part of the ABC transporter complex MglABC involved in galactose/methyl galactoside import. Responsible for energy coupling to the transport system. In Clostridium perfringens (strain ATCC 13124 / DSM 756 / JCM 1290 / NCIMB 6125 / NCTC 8237 / Type A), this protein is Galactose/methyl galactoside import ATP-binding protein MglA.